The sequence spans 341 residues: Biotin synthase (341 aa).

One can recognise a Radical SAM core domain in the interval 39-263; sequence EQVQLCTLLS…VAVARITMPL (225 aa). [4Fe-4S] cluster-binding residues include Cys54, Cys58, and Cys61. Cys98, Cys129, Cys189, and Arg267 together coordinate [2Fe-2S] cluster.

The protein belongs to the radical SAM superfamily. Biotin synthase family. As to quaternary structure, homodimer. It depends on [4Fe-4S] cluster as a cofactor. The cofactor is [2Fe-2S] cluster.

The enzyme catalyses (4R,5S)-dethiobiotin + (sulfur carrier)-SH + 2 reduced [2Fe-2S]-[ferredoxin] + 2 S-adenosyl-L-methionine = (sulfur carrier)-H + biotin + 2 5'-deoxyadenosine + 2 L-methionine + 2 oxidized [2Fe-2S]-[ferredoxin]. Its pathway is cofactor biosynthesis; biotin biosynthesis; biotin from 7,8-diaminononanoate: step 2/2. Catalyzes the conversion of dethiobiotin (DTB) to biotin by the insertion of a sulfur atom into dethiobiotin via a radical-based mechanism. In Erythrobacter litoralis (strain HTCC2594), this protein is Biotin synthase.